Consider the following 118-residue polypeptide: MGSFSYTKEQRLRKRPQFLALGERGKRVQNAYFIAVFAPAQGKVSRLGVTVTKKVGDAVTRNRIKRCVREYFRLNQHRLKAPVDINVIAKKACCQQESPLLAASLDHLFNRVSEGSRH.

Belongs to the RnpA family. Consists of a catalytic RNA component (M1 or rnpB) and a protein subunit.

It catalyses the reaction Endonucleolytic cleavage of RNA, removing 5'-extranucleotides from tRNA precursor.. In terms of biological role, RNaseP catalyzes the removal of the 5'-leader sequence from pre-tRNA to produce the mature 5'-terminus. It can also cleave other RNA substrates such as 4.5S RNA. The protein component plays an auxiliary but essential role in vivo by binding to the 5'-leader sequence and broadening the substrate specificity of the ribozyme. This Desulfatibacillum aliphaticivorans protein is Ribonuclease P protein component.